A 157-amino-acid chain; its full sequence is Transcription elongation factor GreA (157 aa).

A coiled-coil region spans residues 14–37; the sequence is LRKELERLLKRRPLITEAIAEARE.

Belongs to the GreA/GreB family.

In terms of biological role, necessary for efficient RNA polymerase transcription elongation past template-encoded arresting sites. The arresting sites in DNA have the property of trapping a certain fraction of elongating RNA polymerases that pass through, resulting in locked ternary complexes. Cleavage of the nascent transcript by cleavage factors such as GreA or GreB allows the resumption of elongation from the new 3'terminus. GreA releases sequences of 2 to 3 nucleotides. The protein is Transcription elongation factor GreA of Vibrio vulnificus (strain CMCP6).